The sequence spans 482 residues: ATP synthase subunit beta (482 aa).

168-175 contributes to the ATP binding site; that stretch reads GGAGVGKT.

This sequence belongs to the ATPase alpha/beta chains family. As to quaternary structure, F-type ATPases have 2 components, CF(1) - the catalytic core - and CF(0) - the membrane proton channel. CF(1) has five subunits: alpha(3), beta(3), gamma(1), delta(1), epsilon(1). CF(0) has three main subunits: a(1), b(2) and c(9-12). The alpha and beta chains form an alternating ring which encloses part of the gamma chain. CF(1) is attached to CF(0) by a central stalk formed by the gamma and epsilon chains, while a peripheral stalk is formed by the delta and b chains.

The protein localises to the cell membrane. It catalyses the reaction ATP + H2O + 4 H(+)(in) = ADP + phosphate + 5 H(+)(out). Its function is as follows. Produces ATP from ADP in the presence of a proton gradient across the membrane. The catalytic sites are hosted primarily by the beta subunits. In Corynebacterium urealyticum (strain ATCC 43042 / DSM 7109), this protein is ATP synthase subunit beta.